The following is a 246-amino-acid chain: 14-3-3 protein beta/alpha (246 aa).

Met-1 bears the N-acetylmethionine mark. Residue Thr-2 is modified to N-acetylthreonine; in 14-3-3 protein beta/alpha, N-terminally processed. Thr-2 carries the post-translational modification Phosphothreonine. An N6-acetyllysine modification is found at Lys-5. An N6-acetyllysine; alternate modification is found at Lys-51. A Glycyl lysine isopeptide (Lys-Gly) (interchain with G-Cter in SUMO2); alternate cross-link involves residue Lys-51. A Phosphoserine modification is found at Ser-60. Lys-70 carries the post-translational modification N6-acetyllysine. Tyr-84 and Tyr-106 each carry 3'-nitrotyrosine. N6-acetyllysine is present on Lys-117. Ser-186 and Ser-232 each carry phosphoserine.

The protein belongs to the 14-3-3 family. Homodimer. Interacts with SAMSN1 and PRKCE. Interacts with AKAP13. Interacts with SSH1 and TORC2/CRTC2. Interacts with ABL1; the interaction results in cytoplasmic location of ABL1 and inhibition of cABL-mediated apoptosis. Interacts with ROR2 (dimer); the interaction results in phosphorylation of YWHAB on tyrosine residues. Interacts with GAB2. Interacts with YAP1 (phosphorylated form). Interacts with the phosphorylated (by AKT1) form of SRPK2. Interacts with PKA-phosphorylated AANAT. Interacts with MYO1C. Interacts with SIRT2. Interacts with the 'Thr-369' phosphorylated form of DAPK2. Interacts with PI4KB, TBC1D22A and TBC1D22B. Interacts with the 'Ser-1134' and 'Ser-1161' phosphorylated form of SOS1. Interacts (via phosphorylated form) with YWHAB; this interaction occurs in a protein kinase AKT1-dependent manner. Interacts with SLITRK1. Interacts with SYNPO2 (phosphorylated form); YWHAB competes with ACTN2 for interaction with SYNPO2. Interacts with RIPOR2 (via phosphorylated form); this interaction occurs in a chemokine-dependent manner and does not compete for binding of RIPOR2 with RHOA nor blocks inhibition of RIPOR2-mediated RHOA activity. Interacts with MARK2 and MARK3. Interacts with TESK1; the interaction is dependent on the phosphorylation of TESK1 'Ser-439' and inhibits TESK1 kinase activity. Interacts with MEFV. Interacts with HDAC4. Interacts with ADAM22 (via C-terminus). In terms of processing, the alpha, brain-specific form differs from the beta form in being phosphorylated. Phosphorylated on Ser-60 by protein kinase C delta type catalytic subunit in a sphingosine-dependent fashion. Isoform Short contains a N-acetylmethionine at position 1.

Its subcellular location is the cytoplasm. The protein resides in the melanosome. Functionally, adapter protein implicated in the regulation of a large spectrum of both general and specialized signaling pathways. Binds to a large number of partners, usually by recognition of a phosphoserine or phosphothreonine motif. Binding generally results in the modulation of the activity of the binding partner. Negative regulator of osteogenesis. Blocks the nuclear translocation of the phosphorylated form (by AKT1) of SRPK2 and antagonizes its stimulatory effect on cyclin D1 expression resulting in blockage of neuronal apoptosis elicited by SRPK2. Negative regulator of signaling cascades that mediate activation of MAP kinases via AKAP13. The sequence is that of 14-3-3 protein beta/alpha (Ywhab) from Rattus norvegicus (Rat).